The sequence spans 367 residues: Phosphoribosylaminoimidazole-succinocarboxamide synthase (367 aa).

It belongs to the SAICAR synthetase family.

It carries out the reaction 5-amino-1-(5-phospho-D-ribosyl)imidazole-4-carboxylate + L-aspartate + ATP = (2S)-2-[5-amino-1-(5-phospho-beta-D-ribosyl)imidazole-4-carboxamido]succinate + ADP + phosphate + 2 H(+). Its pathway is purine metabolism; IMP biosynthesis via de novo pathway; 5-amino-1-(5-phospho-D-ribosyl)imidazole-4-carboxamide from 5-amino-1-(5-phospho-D-ribosyl)imidazole-4-carboxylate: step 1/2. The polypeptide is Phosphoribosylaminoimidazole-succinocarboxamide synthase (Colwellia psychrerythraea (strain 34H / ATCC BAA-681) (Vibrio psychroerythus)).